The chain runs to 316 residues: 4-hydroxy-3-methylbut-2-enyl diphosphate reductase (316 aa).

Cys12 is a [4Fe-4S] cluster binding site. (2E)-4-hydroxy-3-methylbut-2-enyl diphosphate contacts are provided by His41 and His74. His41 and His74 together coordinate dimethylallyl diphosphate. Isopentenyl diphosphate-binding residues include His41 and His74. Cys96 serves as a coordination point for [4Fe-4S] cluster. His124 lines the (2E)-4-hydroxy-3-methylbut-2-enyl diphosphate pocket. His124 provides a ligand contact to dimethylallyl diphosphate. Residue His124 participates in isopentenyl diphosphate binding. Glu126 functions as the Proton donor in the catalytic mechanism. Thr167 provides a ligand contact to (2E)-4-hydroxy-3-methylbut-2-enyl diphosphate. Position 197 (Cys197) interacts with [4Fe-4S] cluster. Residues Ser225, Ser226, Asn227, and Ser269 each coordinate (2E)-4-hydroxy-3-methylbut-2-enyl diphosphate. The dimethylallyl diphosphate site is built by Ser225, Ser226, Asn227, and Ser269. Positions 225, 226, 227, and 269 each coordinate isopentenyl diphosphate.

This sequence belongs to the IspH family. Homodimer. The cofactor is [4Fe-4S] cluster.

It catalyses the reaction isopentenyl diphosphate + 2 oxidized [2Fe-2S]-[ferredoxin] + H2O = (2E)-4-hydroxy-3-methylbut-2-enyl diphosphate + 2 reduced [2Fe-2S]-[ferredoxin] + 2 H(+). The catalysed reaction is dimethylallyl diphosphate + 2 oxidized [2Fe-2S]-[ferredoxin] + H2O = (2E)-4-hydroxy-3-methylbut-2-enyl diphosphate + 2 reduced [2Fe-2S]-[ferredoxin] + 2 H(+). The protein operates within isoprenoid biosynthesis; dimethylallyl diphosphate biosynthesis; dimethylallyl diphosphate from (2E)-4-hydroxy-3-methylbutenyl diphosphate: step 1/1. It participates in isoprenoid biosynthesis; isopentenyl diphosphate biosynthesis via DXP pathway; isopentenyl diphosphate from 1-deoxy-D-xylulose 5-phosphate: step 6/6. Catalyzes the conversion of 1-hydroxy-2-methyl-2-(E)-butenyl 4-diphosphate (HMBPP) into a mixture of isopentenyl diphosphate (IPP) and dimethylallyl diphosphate (DMAPP). Acts in the terminal step of the DOXP/MEP pathway for isoprenoid precursor biosynthesis. The protein is 4-hydroxy-3-methylbut-2-enyl diphosphate reductase of Pectobacterium carotovorum subsp. carotovorum (strain PC1).